The sequence spans 85 residues: Beta-insect depressant toxin Lqh-dprIT3g (85 aa).

An N-terminal signal peptide occupies residues 1-21; the sequence is MKLLLLLTISASMLIEGLVNA. One can recognise an LCN-type CS-alpha/beta domain in the interval 22–82; the sequence is DGYIRGGDGC…EWDYETDTCG (61 aa). Disulfide bonds link Cys-31–Cys-81, Cys-35–Cys-56, Cys-42–Cys-63, and Cys-46–Cys-65. Gly-82 carries the glycine amide modification.

This sequence belongs to the long (4 C-C) scorpion toxin superfamily. Sodium channel inhibitor family. Beta subfamily. As to expression, expressed by the venom gland.

It is found in the secreted. In terms of biological role, depressant insect beta-toxins cause a transient contraction paralysis followed by a slow flaccid paralysis. They bind voltage-independently at site-4 of sodium channels (Nav) and block action potentials, primarily by depolarizing the axonal membrane and suppressing the sodium current. This depressant toxin is active only on insects. It is found in a relatively small amount in the venom. The protein is Beta-insect depressant toxin Lqh-dprIT3g of Leiurus hebraeus (Hebrew deathstalker scorpion).